The primary structure comprises 99 residues: CLAVATA3/ESR (CLE)-related protein 41 (99 aa).

The first 34 residues, 1 to 34 (MATSNDQTNTKSSHSRTLLLLFIFLSLLLFSSLT), serve as a signal peptide directing secretion. Positions 60 to 99 (ASSTMDLRPKASTRRSRTSRRREFGNDAHEVPSGPNPISN) are disordered. Basic residues predominate over residues 70 to 79 (ASTRRSRTSR). A compositionally biased stretch (basic and acidic residues) spans 80 to 89 (RREFGNDAHE). Residues P91 and P94 each carry the hydroxyproline modification. The O-linked (Ara...) hydroxyproline glycan is linked to P94.

It belongs to the CLV3/ESR signal peptide family. In terms of assembly, CLE41p interacts specifically with the leucine-rich repeat receptor-like protein kinase TDR. Post-translationally, the O-glycosylation (arabinosylation) of the hydroxyproline Pro-94 enhances binding affinity of the CLE41p peptide for its receptor. As to expression, mostly expressed in inflorescence and roots, and, to a lower extent, in seedlings, flowers, leaves and siliques. Observed along the vascular strands in cotyledons, leaves and roots, but not in shoot apical meristems (SAM). Restricted to the phloem and the neighboring pericycle cells in the roots and hypocotyls.

It localises to the secreted. Its subcellular location is the extracellular space. Functionally, extracellular signal peptide that regulates cell fate. May act with TDR as a ligand-receptor pair in a signal transduction pathway that represses tracheary element differentiation but promotes the formation of procambial cells adjacent to phloem cells in the veins in an auxin-dependent manner. Regulates the transition of protophloem cells from proliferation to differentiation, thus impinging on postembryonic growth capacity of the root meristem; this signaling pathway requires CRN and CLV2. The sequence is that of CLAVATA3/ESR (CLE)-related protein 41 from Arabidopsis thaliana (Mouse-ear cress).